A 353-amino-acid chain; its full sequence is Tsukushi (353 aa).

Residues 1–16 (MPWPLLLLLAVSGAQT) form the signal peptide. Positions 17–58 (TRPCFPGCQCEVETFGLFDSFSLTRVDCSGLGPHIMPVPIPL) constitute an LRRNT domain. 10 LRR repeats span residues 59 to 80 (DTAHLDLSSNRLEMVNESVLAG), 85 to 106 (TLAGLDLSHNLLTSISPTAFSR), 109 to 130 (YLESLDLSHNGLTALPAESFTS), 132 to 153 (PLSDVNLSHNQLREVSVSAFTT), 159 to 179 (ALHVDLSHNLIHRLVPHPTRA), 185 to 206 (TIQSLNLAWNRLHAVPNLRDLP), 207 to 227 (LRYLSLDGNPLAVIGPGAFAG), 230 to 249 (GLTHLSLASLQRLPELAPSG), 255 to 276 (GLQVLDLSGNPKLNWAGAEVFS), and 280 to 301 (SLQELDLSGTNLVPLPEALLLH). Residue Asn-74 is glycosylated (N-linked (GlcNAc...) asparagine). N-linked (GlcNAc...) asparagine glycosylation occurs at Asn-137.

Interacts with FZD4 (via FZ domain); competes with WNT2B for binding to FZD4, inhibiting Wnt signaling and repressing peripheral eye development. Interacts with TGFB1; the interaction contributes to regulation of the hair cycle. Interacts with netrin. Interacts with CCN2.

Its subcellular location is the secreted. In terms of biological role, contributes to various developmental events and other processes such as wound healing and cholesterol homeostasis through its interactions with multiple signaling pathways. Wnt signaling inhibitor which competes with WNT2B for binding to Wnt receptor FZD4 and represses WNT2B-dependent development of the peripheral eye. Plays a role in regulating the hair cycle by controlling TGFB1 signaling. Required for the development of the anterior commissure in the brain by inhibiting neurite outgrowth. Essential for terminal differentiation of hippocampal neural stem cells. Plays a role in regulating bone elongation and bone mass by modulating growth plate chondrocyte function and overall body size. Required for development of the inner ear through its involvement in stereocilia formation in inner hair cells. Facilitates wound healing by inhibiting secretion of TGFB1 from macrophages which prevents myofibroblast differentiation, maintaining inflammatory cell quiescence. Plays a role in cholesterol homeostasis by reducing circulating high-density lipoprotein cholesterol, lowering cholesterol efflux capacity and decreasing cholesterol-to-bile acid conversion in the liver. In one study, shown to negatively regulate sympathetic innervation in brown fat, leading to reduced energy expenditure. In another study, shown not to affect brown fat thermogenic capacity, body weight gain or glucose homeostasis. This chain is Tsukushi (TSKU), found in Homo sapiens (Human).